We begin with the raw amino-acid sequence, 804 residues long: Ion-translocating oxidoreductase complex subunit C (804 aa).

2 consecutive 4Fe-4S ferredoxin-type domains span residues S366–Y397 and K407–Y436. Residues C377, C380, C383, C387, C416, C419, C422, and C426 each coordinate [4Fe-4S] cluster. Disordered stretches follow at residues R466–V532 and K567–D804. 7 stretches are compositionally biased toward low complexity: residues S484–A495, K567–Q582, A592–Q619, K629–A660, A668–A693, A706–A731, and A744–A769.

This sequence belongs to the 4Fe4S bacterial-type ferredoxin family. RnfC subfamily. As to quaternary structure, the complex is composed of six subunits: RnfA, RnfB, RnfC, RnfD, RnfE and RnfG. Requires [4Fe-4S] cluster as cofactor.

It localises to the cell inner membrane. Part of a membrane-bound complex that couples electron transfer with translocation of ions across the membrane. The chain is Ion-translocating oxidoreductase complex subunit C from Erwinia tasmaniensis (strain DSM 17950 / CFBP 7177 / CIP 109463 / NCPPB 4357 / Et1/99).